The sequence spans 321 residues: MGKQINNTFTWVIKNLSTLQGLEVRSKIFVVGGCKWRLIAYPEVNDADGYLSLSVYLGVPDCCESLPSGWKRHAKFSLTIVNQLSEGLSQVQETQAWFDENAPGWGFPPMLNLKDVSDKYGGFLVNDEVMVAVAVDVIEVVGSLDAPEMSESMDIKGFKVLPSQVKSVNRLFESHPDIASKFSIKNQSLKTAYMNVLLCLAETLHQSPMEISEDDLSDAKTTLAYMKSVGFKLDWLEKKLDELFEKKKEEADKIRMQNIEEELKDLRQKCSSLEALLKKEKTGVLAAKAPFLFFNNVNDDDLKWILRAVMYTLIMMLFISI.

Residues 6–135 enclose the MATH domain; that stretch reads NNTFTWVIKN…NDEVMVAVAV (130 aa). Residues 232–283 are a coiled coil; sequence KLDWLEKKLDELFEKKKEEADKIRMQNIEEELKDLRQKCSSLEALLKKEKTG.

The sequence is that of MATH domain and coiled-coil domain-containing protein At3g58260 from Arabidopsis thaliana (Mouse-ear cress).